A 473-amino-acid polypeptide reads, in one-letter code: Photosystem II CP43 reaction center protein (473 aa).

Positions 1–14 (MKTLYSLRRFYHVE) are excised as a propeptide. Thr-15 is modified (N-acetylthreonine). Thr-15 is modified (phosphothreonine). Helical transmembrane passes span 69 to 93 (LFEVAHFVPEKPMYEQGLILLPHLA), 134 to 155 (LLGPETLEESFPFFGYVWKDRN), 178 to 200 (KALYFGGVYDTWAPGGGDVRKIT), 255 to 275 (KPFAWARRALVWSGEAYLSYS), and 291 to 312 (CFNNTAYPSEFYGPTGPEASQA). Residue Glu-367 participates in [CaMn4O5] cluster binding. A helical membrane pass occupies residues 447-471 (RARAAAAGFEKGIDRDFEPVLSMTP).

Belongs to the PsbB/PsbC family. PsbC subfamily. PSII is composed of 1 copy each of membrane proteins PsbA, PsbB, PsbC, PsbD, PsbE, PsbF, PsbH, PsbI, PsbJ, PsbK, PsbL, PsbM, PsbT, PsbX, PsbY, PsbZ, Psb30/Ycf12, at least 3 peripheral proteins of the oxygen-evolving complex and a large number of cofactors. It forms dimeric complexes. The cofactor is Binds multiple chlorophylls and provides some of the ligands for the Ca-4Mn-5O cluster of the oxygen-evolving complex. It may also provide a ligand for a Cl- that is required for oxygen evolution. PSII binds additional chlorophylls, carotenoids and specific lipids..

Its subcellular location is the plastid. It localises to the chloroplast thylakoid membrane. One of the components of the core complex of photosystem II (PSII). It binds chlorophyll and helps catalyze the primary light-induced photochemical processes of PSII. PSII is a light-driven water:plastoquinone oxidoreductase, using light energy to abstract electrons from H(2)O, generating O(2) and a proton gradient subsequently used for ATP formation. This chain is Photosystem II CP43 reaction center protein, found in Jasminum nudiflorum (Winter jasmine).